The sequence spans 98 residues: NADH-ubiquinone oxidoreductase chain 4L (98 aa).

The next 3 membrane-spanning stretches (helical) occupy residues 1-21 (MSLI…GLLM), 29-49 (ALLC…LTIL), and 61-81 (IILL…LVMV).

Belongs to the complex I subunit 4L family. As to quaternary structure, core subunit of respiratory chain NADH dehydrogenase (Complex I) which is composed of 45 different subunits.

It localises to the mitochondrion inner membrane. The enzyme catalyses a ubiquinone + NADH + 5 H(+)(in) = a ubiquinol + NAD(+) + 4 H(+)(out). Core subunit of the mitochondrial membrane respiratory chain NADH dehydrogenase (Complex I) which catalyzes electron transfer from NADH through the respiratory chain, using ubiquinone as an electron acceptor. Part of the enzyme membrane arm which is embedded in the lipid bilayer and involved in proton translocation. This is NADH-ubiquinone oxidoreductase chain 4L (MT-ND4L) from Phocoena phocoena (Harbor porpoise).